The primary structure comprises 1125 residues: Probable phospholipid-transporting ATPase IIB (1125 aa).

At 1–131 the chain is on the cytoplasmic side; it reads MADGIPLNPV…IKNQKYNIVT (131 aa). The helical transmembrane segment at 132 to 152 threads the bilayer; the sequence is FVPGVLYQQFKFFLNLYFLVV. At 153–161 the chain is on the extracellular side; sequence ACSQFVPSL. The chain crosses the membrane as a helical span at residues 162–182; the sequence is KIGYLYTYWAPLGFVLAVTMV. Topologically, residues 183–369 are cytoplasmic; the sequence is REAVDEVRRC…LDLELNRLTK (187 aa). A helical membrane pass occupies residues 370–390; it reads ALFLAQVVLSVVMVALQGFLG. At 391–395 the chain is on the extracellular side; it reads PWFRN. A helical membrane pass occupies residues 396-415; the sequence is LFRFVVLFSYIIPISLRVNL. Over 416 to 928 the chain is Cytoplasmic; that stretch reads DMGKSAYGWM…ALGQFVMHRG (513 aa). Catalysis depends on Asp-455, which acts as the 4-aspartylphosphate intermediate. Positions 455, 456, and 457 each coordinate ATP. Asp-455 contributes to the Mg(2+) binding site. Thr-457 serves as a coordination point for Mg(2+). Residues 500 to 511 are compositionally biased toward low complexity; that stretch reads QSNGSSASSTPS. Disordered regions lie at residues 500-525 and 552-574; these read QSNGSSASSTPSRKPQPPAPKVRKSV and GANAEPESTEADQDFSDDNRTYQ. Residues 558–567 show a composition bias toward acidic residues; the sequence is ESTEADQDFS. ATP contacts are provided by Glu-580, Phe-622, Lys-627, Lys-646, Arg-675, Thr-676, Thr-755, Gly-756, Asp-757, Arg-837, and Lys-843. Asp-863 lines the Mg(2+) pocket. ATP is bound by residues Asn-866 and Asp-867. Mg(2+) is bound at residue Asp-867. A helical membrane pass occupies residues 929-949; the sequence is MIISTMQAVFSSIFYFASVPL. Residues 950 to 951 lie on the Extracellular side of the membrane; it reads YQ. A helical membrane pass occupies residues 952 to 972; the sequence is GFLMVGYATIYTMFPVFSLVL. Over 973–1001 the chain is Cytoplasmic; it reads DQDVKPEMALLYPELYKDLTKGRSLSFKT. The helical transmembrane segment at 1002–1022 threads the bilayer; the sequence is FLIWVLISIYQGGILMYGALV. Residues 1023–1030 lie on the Extracellular side of the membrane; the sequence is LFDQEFVH. A helical transmembrane segment spans residues 1031 to 1051; it reads VVAISFTALILTELLMVALTI. At 1052 to 1055 the chain is on the cytoplasmic side; it reads RTWH. The helical transmembrane segment at 1056–1076 threads the bilayer; sequence WLMVVAQLISLACYLASLAFL. At 1077–1088 the chain is on the extracellular side; sequence NEYFDLSFITTR. The helical transmembrane segment at 1089–1109 threads the bilayer; the sequence is VFLWKVCVITLVSCLPLYIIK. The Cytoplasmic segment spans residues 1110–1125; that stretch reads YLKRKFSPPSYSKLSS.

It belongs to the cation transport ATPase (P-type) (TC 3.A.3) family. Type IV subfamily. Requires Mg(2+) as cofactor.

The protein localises to the golgi apparatus. Its subcellular location is the trans-Golgi network membrane. It carries out the reaction ATP + H2O + phospholipidSide 1 = ADP + phosphate + phospholipidSide 2.. The sequence is that of Probable phospholipid-transporting ATPase IIB (atp9b) from Danio rerio (Zebrafish).